A 214-amino-acid polypeptide reads, in one-letter code: Urease accessory protein UreG 2 (214 aa).

22–29 (GPVGSGKT) serves as a coordination point for GTP.

This sequence belongs to the SIMIBI class G3E GTPase family. UreG subfamily. In terms of assembly, homodimer. UreD, UreF and UreG form a complex that acts as a GTP-hydrolysis-dependent molecular chaperone, activating the urease apoprotein by helping to assemble the nickel containing metallocenter of UreC. The UreE protein probably delivers the nickel.

The protein localises to the cytoplasm. Facilitates the functional incorporation of the urease nickel metallocenter. This process requires GTP hydrolysis, probably effectuated by UreG. In Bradyrhizobium sp. (strain BTAi1 / ATCC BAA-1182), this protein is Urease accessory protein UreG 2.